A 358-amino-acid chain; its full sequence is Src kinase-associated phosphoprotein 2 (358 aa).

Phosphoserine occurs at positions 5 and 9. Residues 14–64 (PEEIRNLLADVETFVADTLKGENLSKKAKEKRESLIKKIKDVKSVYLQEFQ) form a homodimerization region. A Phosphotyrosine modification is found at Tyr-75. 2 positions are modified to phosphoserine: Ser-87 and Ser-90. Residues 116–219 (FVIKAGYLEK…WVQQLKFILQ (104 aa)) enclose the PH domain. Phosphotyrosine occurs at positions 151 and 197. Residue Ser-223 is modified to Phosphoserine. Residues 232 to 292 (ERGELYDDVD…RDSVHHTSGD (61 aa)) form a disordered region. Positions 255-270 (IDDEIYEELPEEEEDT) are enriched in acidic residues. Residue Tyr-260 is modified to Phosphotyrosine; by FYN. Phosphoserine occurs at positions 272, 282, and 285. Positions 274 to 292 (KMDEQGKGSRDSVHHTSGD) are enriched in basic and acidic residues. Residues 296-357 (DYANFYQGLW…PKAYLMEMYD (62 aa)) form the SH3 domain.

The protein belongs to the SKAP family. As to quaternary structure, interacts with LAT, GRB2, PTK2B and PRAM1. Homodimer. Interacts with FYB1, which is required for SKAP2 protein stability. Interacts with PTPNS1. Part of a complex consisting of SKAP2, FYB1 and PTPNS1. Part of a complex consisting of SKAP2, FYB1 and PIRB. May interact with actin. May interact with FYN, HCK and LYN. Interacts with FASLG. Dephosphorylated on Tyr-75 by PTPN22. Phosphorylated by FYN on Tyr-260. In case of infection with Y.pseudotuberculosis, dephosphorylated by bacterial phosphatase yopH. In terms of tissue distribution, expressed in kidney, lung, liver, spleen, bone marrow and testis. Present in T-cells, B-cells, and all cells of the myelomonocytic lineage. Present in all brain regions, with highest levels in neurons from the Purkinje cell layer, hippocampal gyrus, cortex and substantia nigra (at protein level).

It is found in the cytoplasm. Functionally, may be involved in B-cell and macrophage adhesion processes. In B-cells, may act by coupling the B-cell receptor (BCR) to integrin activation. May play a role in src signaling pathway. This Mus musculus (Mouse) protein is Src kinase-associated phosphoprotein 2 (Skap2).